Consider the following 406-residue polypeptide: Corticosteroid-binding globulin (406 aa).

The N-terminal stretch at 1–22 (MLLTLYACLLWLSTSGLWTSQA) is a signal peptide. N-linked (GlcNAc...) asparagine glycosylation is found at asparagine 95, asparagine 119, and asparagine 223. Glutamine 253 provides a ligand contact to cortisol. An N-linked (GlcNAc...) asparagine glycan is attached at asparagine 259. Cortisol is bound by residues glutamine 285 and tryptophan 394.

The protein belongs to the serpin family.

The protein localises to the secreted. In terms of biological role, major transport protein for glucocorticoids and progestins in the blood of almost all vertebrate species. This chain is Corticosteroid-binding globulin (Serpina6), found in Sus scrofa (Pig).